A 155-amino-acid chain; its full sequence is Deoxyuridine 5'-triphosphate nucleotidohydrolase (155 aa).

Residues 72–74 (RSG), asparagine 85, 89–91 (TVD), and lysine 99 each bind substrate.

It belongs to the dUTPase family. Requires Mg(2+) as cofactor.

It catalyses the reaction dUTP + H2O = dUMP + diphosphate + H(+). It functions in the pathway pyrimidine metabolism; dUMP biosynthesis; dUMP from dCTP (dUTP route): step 2/2. This enzyme is involved in nucleotide metabolism: it produces dUMP, the immediate precursor of thymidine nucleotides and it decreases the intracellular concentration of dUTP so that uracil cannot be incorporated into DNA. In Parvibaculum lavamentivorans (strain DS-1 / DSM 13023 / NCIMB 13966), this protein is Deoxyuridine 5'-triphosphate nucleotidohydrolase.